A 163-amino-acid chain; its full sequence is Small ribosomal subunit protein uS9 (163 aa).

Positions 1–11 (MAENTNDSQVV) are enriched in polar residues. The disordered stretch occupies residues 1–40 (MAENTNDSQVVETEEELTNYTTETNAGAGTGTSAIEPGYG). Residues 18–27 (TNYTTETNAG) are compositionally biased toward low complexity.

It belongs to the universal ribosomal protein uS9 family.

This Bifidobacterium longum (strain DJO10A) protein is Small ribosomal subunit protein uS9.